Reading from the N-terminus, the 506-residue chain is UDP-N-acetylmuramoyl-L-alanyl-D-glutamate--2,6-diaminopimelate ligase (506 aa).

Residue S42 coordinates UDP-N-acetyl-alpha-D-muramoyl-L-alanyl-D-glutamate. Position 125–131 (125–131 (GTSGKTT)) interacts with ATP. UDP-N-acetyl-alpha-D-muramoyl-L-alanyl-D-glutamate-binding positions include 166-167 (TT), S193, and R201. K233 carries the N6-carboxylysine modification. Meso-2,6-diaminopimelate contacts are provided by residues R395, 419–422 (DNPR), G475, and E479. The short motif at 419–422 (DNPR) is the Meso-diaminopimelate recognition motif element.

The protein belongs to the MurCDEF family. MurE subfamily. Mg(2+) is required as a cofactor. Carboxylation is probably crucial for Mg(2+) binding and, consequently, for the gamma-phosphate positioning of ATP.

Its subcellular location is the cytoplasm. The enzyme catalyses UDP-N-acetyl-alpha-D-muramoyl-L-alanyl-D-glutamate + meso-2,6-diaminopimelate + ATP = UDP-N-acetyl-alpha-D-muramoyl-L-alanyl-gamma-D-glutamyl-meso-2,6-diaminopimelate + ADP + phosphate + H(+). It functions in the pathway cell wall biogenesis; peptidoglycan biosynthesis. In terms of biological role, catalyzes the addition of meso-diaminopimelic acid to the nucleotide precursor UDP-N-acetylmuramoyl-L-alanyl-D-glutamate (UMAG) in the biosynthesis of bacterial cell-wall peptidoglycan. The protein is UDP-N-acetylmuramoyl-L-alanyl-D-glutamate--2,6-diaminopimelate ligase of Streptomyces avermitilis (strain ATCC 31267 / DSM 46492 / JCM 5070 / NBRC 14893 / NCIMB 12804 / NRRL 8165 / MA-4680).